Consider the following 299-residue polypeptide: Heterodisulfide reductase subunit B-like protein (299 aa).

It belongs to the HdrB family. In terms of assembly, the heterodisulfide reductase is composed of three subunits; HdlA, HdlB and HdlC. It forms a complex with the F420-non-reducing hydrogenase (Mvh), which provides the reducing equivalents to the heterodisulfide reductase.

It is found in the cytoplasm. Functionally, has oxidoreductase activity. The Hdl and Mvh subunits may together mediate electron transfer from hydrogen to an unidentified electron acceptor on the cytoplasmic side of the membrane. This Archaeoglobus profundus (strain DSM 5631 / JCM 9629 / NBRC 100127 / Av18) protein is Heterodisulfide reductase subunit B-like protein (hdlB).